The chain runs to 179 residues: Large ribosomal subunit protein uL6 (179 aa).

This sequence belongs to the universal ribosomal protein uL6 family. As to quaternary structure, part of the 50S ribosomal subunit.

Functionally, this protein binds to the 23S rRNA, and is important in its secondary structure. It is located near the subunit interface in the base of the L7/L12 stalk, and near the tRNA binding site of the peptidyltransferase center. The sequence is that of Large ribosomal subunit protein uL6 from Gloeothece citriformis (strain PCC 7424) (Cyanothece sp. (strain PCC 7424)).